Here is a 166-residue protein sequence, read N- to C-terminus: Endoribonuclease YbeY (166 aa).

The Zn(2+) site is built by His111, His115, and His121. Residues Leu141–Glu166 are disordered. Positions Ala153–Glu166 are enriched in basic and acidic residues.

This sequence belongs to the endoribonuclease YbeY family. It depends on Zn(2+) as a cofactor.

The protein resides in the cytoplasm. Single strand-specific metallo-endoribonuclease involved in late-stage 70S ribosome quality control and in maturation of the 3' terminus of the 16S rRNA. In Pseudomonas savastanoi pv. phaseolicola (strain 1448A / Race 6) (Pseudomonas syringae pv. phaseolicola (strain 1448A / Race 6)), this protein is Endoribonuclease YbeY.